A 1032-amino-acid polypeptide reads, in one-letter code: MVLRRRTLHPLSLLVQAAVLAETLALGTLPAFLPCELKPHGLVDCNWLFLKSVPRFSAAASCSNITRLSLISNRIHHLHNSDFVHLSNLRQLNLKWNCPPTGLSPLHFSCHMTIEPRTFLAMRTLEELNLSYNGITTVPRLPSSLVNLSLSHTNILVLDANSLAGLYSLRVLFMDGNCYYKNPCTGAVKVTPGALLGLSNLTHLSLKYNNLTKVPRQLPPSLEYLLVSYNLIVKLGPEDLANLTSLRVLDVGGNCRRCDHAPNPCIECGQKSLHLHPETFHHLSHLEGLVLKDSSLHTLNSSWFQGLVNLSVLDLSENFLYESITHTNAFQNLTRLRKLNLSFNYRKKVSFARLHLASSFKNLVSLQELNMNGIFFRLLNKYTLRWLADLPKLHTLHLQMNFINQAQLSIFGTFRALRFVDLSDNRISGPSTLSEATPEEADDAEQEELLSADPHPAPLSTPASKNFMDRCKNFKFTMDLSRNNLVTIKPEMFVNLSRLQCLSLSHNSIAQAVNGSQFLPLTNLQVLDLSHNKLDLYHWKSFSELPQLQALDLSYNSQPFSMKGIGHNFSFVTHLSMLQSLSLAHNDIHTRVSSHLNSNSVRFLDFSGNGMGRMWDEGGLYLHFFQGLSGLLKLDLSQNNLHILRPQNLDNLPKSLKLLSLRDNYLSFFNWTSLSFLPNLEVLDLAGNQLKALTNGTLPNGTLLQKLDVSSNSIVSVVPAFFALAVELKEVNLSHNILKTVDRSWFGPIVMNLTVLDVRSNPLHCACGAAFVDLLLEVQTKVPGLANGVKCGSPGQLQGRSIFAQDLRLCLDEVLSWDCFGLSLLAVAVGMVVPILHHLCGWDVWYCFHLCLAWLPLLARSRRSAQTLPYDAFVVFDKAQSAVADWVYNELRVRLEERRGRRALRLCLEDRDWLPGQTLFENLWASIYGSRKTLFVLAHTDRVSGLLRTSFLLAQQRLLEDRKDVVVLVILRPDAHRSRYVRLRQRLCRQSVLFWPQQPNGQGGFWAQLSTALTRDNRHFYNQNFCRGPTAE.

The signal sequence occupies residues 1 to 25; the sequence is MVLRRRTLHPLSLLVQAAVLAETLA. At 26–818 the chain is on the extracellular side; that stretch reads LGTLPAFLPC…LCLDEVLSWD (793 aa). Cys35 and Cys45 are disulfide-bonded. A DNA-binding site is contributed by 47-51; it reads WLFLK. 26 LRR repeats span residues 62–85, 87–110, 122–147, 150–166, 167–190, 198–221, 223–242, 243–268, 283–306, 308–332, 333–356, 363–386, 390–413, 415–440, 471–495, 497–520, 521–544, 546–573, 575–599, 601–623, 628–651, 653–676, 677–700, 702–724, 725–748, and 750–773; these read CSNITRLSLISNRIHHLHNSDFVH, SNLRQLNLKWNCPPTGLSPLHFSC, MRTLEELNLSYNGITTVPRLPSSLVN, LSHTNILVLDANSLAGL, YSLRVLFMDGNCYYKNPCTGAVKV, LSNLTHLSLKYNNLTKVPRQLPPS, EYLLVSYNLIVKLGPEDLAN, LTSLRVLDVGGNCRRCDHAPNPCIEC, LSHLEGLVLKDSSLHTLNSSWFQG, VNLSVLDLSENFLYESITHTNAFQN, LTRLRKLNLSFNYRKKVSFARLHL, LVSLQELNMNGIFFRLLNKYTLRW, LPKLHTLHLQMNFINQAQLSIFGT, RALRFVDLSDNRISGPSTLSEATPEE, CKNFKFTMDLSRNNLVTIKPEMFVN, SRLQCLSLSHNSIAQAVNGSQFLP, LTNLQVLDLSHNKLDLYHWKSFSE, PQLQALDLSYNSQPFSMKGIGHNFSFVT, LSMLQSLSLAHNDIHTRVSSHLNSN, VRFLDFSGNGMGRMWDEGGLYLH, LSGLLKLDLSQNNLHILRPQNLDN, PKSLKLLSLRDNYLSFFNWTSLSF, LPNLEVLDLAGNQLKALTNGTLPN, TLLQKLDVSSNSIVSVVPAFFAL, AVELKEVNLSHNILKTVDRSWFGP, and VMNLTVLDVRSNPLHCACGAAFVD. Residue Asn64 is glycosylated (N-linked (GlcNAc...) asparagine). Residues 72 to 77 and 95 to 109 each bind DNA; these read SNRIHH and KWNCPPTGLSPLHFS. An intrachain disulfide couples Cys98 to Cys110. The N-linked (GlcNAc...) asparagine glycan is linked to Asn129. DNA is bound at residue Tyr132. N-linked (GlcNAc...) asparagine glycosylation occurs at Asn147. An intrachain disulfide couples Cys178 to Cys184. DNA is bound at residue 179 to 181; the sequence is YYK. Residue Asn200 is glycosylated (N-linked (GlcNAc...) asparagine). Position 208 (Tyr208) interacts with DNA. N-linked (GlcNAc...) asparagine glycosylation is found at Asn210 and Asn242. Cystine bridges form between Cys255–Cys268 and Cys258–Cys265. S-palmitoyl cysteine attachment occurs at residues Cys258 and Cys265. Asn300, Asn309, Asn332, and Asn340 each carry an N-linked (GlcNAc...) asparagine glycan. The tract at residues 430–462 is disordered; the sequence is PSTLSEATPEEADDAEQEELLSADPHPAPLSTP. Over residues 437-450 the composition is skewed to acidic residues; sequence TPEEADDAEQEELL. A disulfide bridge links Cys471 with Cys501. Residues Asn495 and Asn514 are each glycosylated (N-linked (GlcNAc...) asparagine). N-linked (GlcNAc...) asparagine glycosylation is present at Asn568. Residues Asn670, Asn695, and Asn700 are each glycosylated (N-linked (GlcNAc...) asparagine). N-linked (GlcNAc...) asparagine glycans are attached at residues Asn732 and Asn752. Cystine bridges form between Cys765-Cys791 and Cys767-Cys810. Residues 819-839 traverse the membrane as a helical segment; it reads CFGLSLLAVAVGMVVPILHHL. At 840 to 1032 the chain is on the cytoplasmic side; it reads CGWDVWYCFH…QNFCRGPTAE (193 aa). Positions 868-1013 constitute a TIR domain; the sequence is LPYDAFVVFD…GFWAQLSTAL (146 aa).

It belongs to the Toll-like receptor family. In terms of assembly, monomer and homodimer. Exists as a monomer in the absence of unmethylated cytidine-phosphate-guanosine (CpG) ligand. Proteolytic processing of an insertion loop (Z-loop) is required for homodimerization upon binding to the unmethylated CpG ligand leading to its activation. Interacts with MYD88 via their respective TIR domains. Interacts with BTK. Interacts (via transmembrane domain) with UNC93B1. Interacts with CD300LH; the interaction may promote full activation of TLR9-triggered innate responses. Interacts with CNPY3 and HSP90B1; this interaction is required for proper folding in the endoplasmic reticulum. Interacts with SMPDL3B. Interacts with CD82; this interaction is essential for TLR9-dependent myddosome formation in response to CpG stimulation. In terms of processing, activated by proteolytic cleavage of the flexible loop between repeats LRR14 and LRR15 within the ectodomain. Cleavage requires UNC93B1. Proteolytically processed by first removing the majority of the ectodomain by either asparagine endopeptidase (AEP) or a cathepsin followed by a trimming event that is solely cathepsin mediated and required for optimal receptor signaling. Palmitoylated by ZDHHC3 in the Golgi regulates TLR9 trafficking from the Golgi to endosomes. Depalmitoylation by PPT1 controls the release of TLR9 from UNC93B1 in endosomes. In terms of tissue distribution, expressed in the basolateral region of gastric epithelial cells with high levels detected in antrum and body mucosa (at protein level). Detected in spleen and stomach at higher levels in C57BL/6 mice than BALB/C.

It is found in the endoplasmic reticulum membrane. The protein localises to the endosome. It localises to the lysosome. Its subcellular location is the cytoplasmic vesicle. The protein resides in the phagosome. Functionally, key component of innate and adaptive immunity. TLRs (Toll-like receptors) control host immune response against pathogens through recognition of molecular patterns specific to microorganisms. TLR9 is a nucleotide-sensing TLR which is activated by unmethylated cytidine-phosphate-guanosine (CpG) dinucleotides. Acts via MYD88 and TRAF6, leading to NF-kappa-B activation, cytokine secretion and the inflammatory response. Plays a role in defense against systemic mouse cytomegalovirus infection. Controls lymphocyte response to Helicobacter infection. Upon CpG stimulation, induces B-cell proliferation, activation, survival and antibody production. In Mus musculus (Mouse), this protein is Toll-like receptor 9 (Tlr9).